The chain runs to 207 residues: Ribosomal RNA small subunit methyltransferase G (207 aa).

Residues Gly-77, Phe-82, 100 to 102 (ERS), and Arg-141 each bind S-adenosyl-L-methionine.

The protein belongs to the methyltransferase superfamily. RNA methyltransferase RsmG family.

The protein resides in the cytoplasm. In terms of biological role, specifically methylates the N7 position of a guanine in 16S rRNA. This chain is Ribosomal RNA small subunit methyltransferase G, found in Borrelia turicatae (strain 91E135).